A 196-amino-acid polypeptide reads, in one-letter code: Signal peptidase complex catalytic subunit SEC11 (196 aa).

The Cytoplasmic segment spans residues 1–14 (MLSSLSPYMANPRQ). A helical; Signal-anchor for type II membrane protein membrane pass occupies residues 15 to 33 (TFTQVLNFALVLSTAFMLW). Topologically, residues 34 to 196 (KGLSVYTNSA…MGLMVILQRE (163 aa)) are lumenal. Residues Ser-53 and His-92 each act as charge relay system in the active site. The disordered stretch occupies residues 101-133 (VPGKDKTKKGGKQGVEASPSSLESQKLLTKGDN). A compositionally biased stretch (polar residues) spans 118–133 (SPSSLESQKLLTKGDN). N-linked (GlcNAc...) asparagine glycosylation occurs at Asn-134. Asp-138 acts as the Charge relay system in catalysis. A C-terminal short (CTS) helix region spans residues 182–193 (VLLGFMGLMVIL).

This sequence belongs to the peptidase S26B family. In terms of assembly, component of the signal peptidase complex (SPC) composed of a catalytic subunit SEC11 and three accessory subunits SPC1, SPC2 and SPC3. The complex induces a local thinning of the ER membrane which is used to measure the length of the signal peptide (SP) h-region of protein substrates. This ensures the selectivity of the complex towards h-regions shorter than 18-20 amino acids. SPC associates with the translocon complex.

Its subcellular location is the endoplasmic reticulum membrane. It catalyses the reaction Cleavage of hydrophobic, N-terminal signal or leader sequences from secreted and periplasmic proteins.. Functionally, catalytic component of the signal peptidase complex (SPC) which catalyzes the cleavage of N-terminal signal sequences from nascent proteins as they are translocated into the lumen of the endoplasmic reticulum. Specifically cleaves N-terminal signal peptides that contain a hydrophobic alpha-helix (h-region) shorter than 18-20 amino acids. This Ajellomyces dermatitidis (strain ER-3 / ATCC MYA-2586) (Blastomyces dermatitidis) protein is Signal peptidase complex catalytic subunit SEC11 (SEC11).